The sequence spans 201 residues: Protein Thf1 (201 aa).

The stretch at 174–201 (IYKSSISKMEQAKELIQEQRIKDKKKTL) forms a coiled coil.

Belongs to the THF1 family.

Functionally, may be involved in photosynthetic membrane biogenesis. The protein is Protein Thf1 of Prochlorococcus marinus (strain MIT 9312).